We begin with the raw amino-acid sequence, 269 residues long: 4-hydroxy-tetrahydrodipicolinate reductase (269 aa).

An NAD(+)-binding site is contributed by 11–16 (GPIGRM). Lys39 provides a ligand contact to NADP(+). NAD(+) contacts are provided by residues 101 to 103 (GTT) and 125 to 128 (ASNF). His158 acts as the Proton donor/acceptor in catalysis. His159 contacts (S)-2,3,4,5-tetrahydrodipicolinate. Residue Lys162 is the Proton donor of the active site. 168-169 (GT) is a (S)-2,3,4,5-tetrahydrodipicolinate binding site.

The protein belongs to the DapB family. In terms of assembly, homotetramer.

It is found in the cytoplasm. The enzyme catalyses (S)-2,3,4,5-tetrahydrodipicolinate + NAD(+) + H2O = (2S,4S)-4-hydroxy-2,3,4,5-tetrahydrodipicolinate + NADH + H(+). The catalysed reaction is (S)-2,3,4,5-tetrahydrodipicolinate + NADP(+) + H2O = (2S,4S)-4-hydroxy-2,3,4,5-tetrahydrodipicolinate + NADPH + H(+). It participates in amino-acid biosynthesis; L-lysine biosynthesis via DAP pathway; (S)-tetrahydrodipicolinate from L-aspartate: step 4/4. Catalyzes the conversion of 4-hydroxy-tetrahydrodipicolinate (HTPA) to tetrahydrodipicolinate. The polypeptide is 4-hydroxy-tetrahydrodipicolinate reductase (Buchnera aphidicola subsp. Acyrthosiphon pisum (strain APS) (Acyrthosiphon pisum symbiotic bacterium)).